Here is a 499-residue protein sequence, read N- to C-terminus: MNNQPVILAIDQGTTSTRAILFSATLEILAVQQKELKLHYPHKGWVEQNPEAIWQDTLEVCHAVLEHNVSMVGSVAAIGITNQRETTILWDRKTGKPVYPAIVWQDRRTDIGCEQLKAQGYEPMVTARTGLLFDPYFSATKIAWILDNVEGVRSRAMRGELAFGTVDCYLLWHLTGGKVHATDVTNAARTLLFNIVEQKWDADLLTLFNIPETILPEVRDNAARFGMTDRILFGRGIPIGGMAGDQHAALIGQRCFRPGMVKSTYGTGCFALMNIGSDFKPSQHRLLTTPAYRLNGKMVYAIEGSIFIAGAAIQWLRDELEFFQEVAASDALALSVPDSNEVYFVPAFTGLGAPYWRPDVRGMISGLSRDTTRVHIVRAALEAQGYQTRDLMAAIEEDGGHHAEIIRVDGGLVANKFMCQFLADILNKPVEVPKITEATALGAAILAGLTVDLFADLEVTGCYWQRDKIYTPTITETERERLYAGWKAAVQSLLHASRN.

T14 lines the ADP pocket. ATP contacts are provided by T14, T15, and S16. T14 contributes to the sn-glycerol 3-phosphate binding site. ADP is bound at residue R18. Positions 84, 85, 136, and 245 each coordinate sn-glycerol 3-phosphate. Residues R84, E85, Y136, D245, and Q246 each coordinate glycerol. Residues T267 and G310 each coordinate ADP. Residues T267, G310, Q314, and G411 each contribute to the ATP site. ADP-binding residues include G411 and N415.

The protein belongs to the FGGY kinase family.

The enzyme catalyses glycerol + ATP = sn-glycerol 3-phosphate + ADP + H(+). Its pathway is polyol metabolism; glycerol degradation via glycerol kinase pathway; sn-glycerol 3-phosphate from glycerol: step 1/1. Its activity is regulated as follows. Inhibited by fructose 1,6-bisphosphate (FBP). Its function is as follows. Key enzyme in the regulation of glycerol uptake and metabolism. Catalyzes the phosphorylation of glycerol to yield sn-glycerol 3-phosphate. The protein is Glycerol kinase of Nitrosomonas eutropha (strain DSM 101675 / C91 / Nm57).